A 687-amino-acid chain; its full sequence is Putative metabolite transport protein YDL199C (687 aa).

The interval 1–22 (MKPPLNMSRSNKPLTQEANSSA) is disordered. Residues 1–122 (MKPPLNMSRS…RHSSRVLRTS (122 aa)) lie on the Extracellular side of the membrane. A compositionally biased stretch (polar residues) spans 7–22 (MSRSNKPLTQEANSSA). Residue Ser-90 is modified to Phosphoserine. A helical membrane pass occupies residues 123 to 143 (FISFVVLVSSLSGLDQGLISG). Over 144–164 (NVMTLSFQKYFHYPLTSPLGN) the chain is Cytoplasmic. Residues 165–185 (IVSIVNLGAFMASLFVYSGIL) form a helical membrane-spanning segment. Topologically, residues 186-192 (EPCSRKK) are extracellular. The chain crosses the membrane as a helical span at residues 193-213 (MLQISTMIYSLGAIVQVLALN). The Cytoplasmic segment spans residues 214–216 (QWC). A helical membrane pass occupies residues 217 to 237 (LLLGRFLLGVGMGFAFSMVII). The Extracellular segment spans residues 238-251 (YQFEFPLPCIRKRT). A helical membrane pass occupies residues 252-272 (LISIQCVSSVIAYSFGIWINC). Topologically, residues 273 to 283 (AFRYLGFAWRY) are cytoplasmic. Residues 284 to 304 (PLSTHVALGIILNLMSFYLIL) form a helical membrane-spanning segment. The Extracellular portion of the chain corresponds to 305 to 410 (ESPSWLLKQK…MGRGERKSIY (106 aa)). A helical membrane pass occupies residues 411-431 (LTGLNALIYSIVILAYVPLVL). Over 432-439 (RKRKEKTN) the chain is Cytoplasmic. A helical membrane pass occupies residues 440–460 (VLLGSIVMCALLFTISFTDWF). Over 461-469 (PKSTTRYIS) the chain is Extracellular. Residues 470-490 (ILFAVFLFTHFISWDSIGWVM) traverse the membrane as a helical segment. Residues 491 to 500 (TIELLPHLSQ) are Cytoplasmic-facing. The chain crosses the membrane as a helical span at residues 501–521 (APVILLVSNFYWIFKWFVSLI). At 522-533 (TPILIDRLSWKF) the chain is on the extracellular side. The helical transmembrane segment at 534–554 (YLIPSLSSFISIIFVLKIFPI) threads the bilayer. The Cytoplasmic portion of the chain corresponds to 555 to 687 (ETRDERLDSD…QNSPGDMAVA (133 aa)). Disordered stretches follow at residues 561–587 (LDSDDDSTGNGSGNHDDVFDDTGSEFS) and 654–687 (SFHNRTDPNISDNIAANKPSSGGGQNSPGDMAVA). Residues 660–673 (DPNISDNIAANKPS) show a composition bias toward polar residues.

Belongs to the major facilitator superfamily. Sugar transporter (TC 2.A.1.1) family.

Its subcellular location is the membrane. In Saccharomyces cerevisiae (strain ATCC 204508 / S288c) (Baker's yeast), this protein is Putative metabolite transport protein YDL199C.